The sequence spans 290 residues: Bifunctional protein FolD 1 (290 aa).

NADP(+)-binding positions include 164–166, Ile193, and Ile236; that span reads GRS.

This sequence belongs to the tetrahydrofolate dehydrogenase/cyclohydrolase family. In terms of assembly, homodimer.

The catalysed reaction is (6R)-5,10-methylene-5,6,7,8-tetrahydrofolate + NADP(+) = (6R)-5,10-methenyltetrahydrofolate + NADPH. The enzyme catalyses (6R)-5,10-methenyltetrahydrofolate + H2O = (6R)-10-formyltetrahydrofolate + H(+). It functions in the pathway one-carbon metabolism; tetrahydrofolate interconversion. Functionally, catalyzes the oxidation of 5,10-methylenetetrahydrofolate to 5,10-methenyltetrahydrofolate and then the hydrolysis of 5,10-methenyltetrahydrofolate to 10-formyltetrahydrofolate. This Geobacter metallireducens (strain ATCC 53774 / DSM 7210 / GS-15) protein is Bifunctional protein FolD 1.